The sequence spans 1350 residues: Zinc finger protein Xfin (1350 aa).

The KRAB domain maps to 1 to 58 (MEEPKCLQREMYKSVMTENYQCVLSLGYPIRKPEIVSMMEVGEELWSKNDSARPGQKE). Positions 47–68 (SKNDSARPGQKEVEGETPKESD) are disordered. C2H2-type zinc fingers lie at residues 108-130 (HICSHYGKLFSCYAAVVRHQRMH), 136-158 (HHCPHCKKSFVQRSDFIKHQRTH), 164-186 (YQCVECQKKFTERSALVNHQRTH), 192-214 (YTCLDCQKTFNQRSALTKHRRTH), 220-242 (YRCSVCSKSFIQNSDLVKHLRTH), 248-270 (YECPLCVKRFAESSALMKHKRTH), 276-298 (FRCSECSRSFTHNSDLTAHMRKH), 326-348 (YSCSKCRKTFKRWKSFLNHQQTH), 354-376 (YLCSHCNKGFIQNSDLVKHFRTH), 382-404 (YQCAECHKGFIQKSDLVKHLRTH), 410-432 (FKCSHCDKKFTERSALAKHQRTH), 438-460 (YKCSDCGKEFTQRSNLILHQRIH), 466-488 (YKCTLCDRTFIQNSDLVKHQKVH), 503-525 (HKCSKCDLTFSHWSTFMKHSKLH), 531-553 (FQCAECKKGFTQKSDLVKHIRVH), 559-581 (FKCLLCKKSFSQNSDLHKHWRIH), 587-609 (FPCYTCDKSFTERSALIKHHRTH), 615-637 (HKCSVCQKGFIQKSALTKHSRTH), 643-665 (YPCTQCGKSFIQNSDLVKHQRIH), 671-693 (YHCTECNKRFTEGSSLVKHRRTH), 699-721 (YRCPQCEKTFIQSSDLVKHLVVH), 750-772 (YPCTECGKVFHQRPALLKHLRTH), 778-800 (YPCNECDKSFFQTSDLVKHLRTH), 806-828 (YHCPECNKGFIQNSDLVKHQRTH), 834-856 (YTCSQCDKGFIQRSALTKHMRTH), 862-884 (YKCEQCQKCFIQNSDLVKHQRIH), 890-912 (YHCPDCDKRFTEGSSLIKHQRIH), 918-940 (YPCGVCGKSFSQSSNLLKHLKCH), 988-1010 (FKCNDCGKCFAHRSVLIKHVRIH), 1016-1038 (YKCSQCTRSFIQKSDLVKHYRTH), 1044-1066 (YKCGLCERSFVEKSALSRHQRVH), 1136-1158 (YSCSECGKCFTHRSVFLKHWRMH), 1164-1186 (YTCKECGKSFSQSSALVKHVRIH), 1192-1214 (YPCSTCGKSFIQKSDLAKHQRIH), 1220-1242 (YTCTVCGKKFIDRSSVVKHSRTH), 1248-1270 (YKCNECTKGFVQKSDLVKHMRTH), and 1276-1298 (YGCNCCDRSFSTHSASVRHQRMC).

The protein belongs to the krueppel C2H2-type zinc-finger protein family. Post-translationally, phosphorylated. Phosphorylation enhances RNA binding. Expressed in oocytes, and in specialized cell types such as neural retina cones in adults.

The protein resides in the cytoplasm. Its function is as follows. Binds to poly-G sequences in RNA. May function in post-translational regulation processes. The chain is Zinc finger protein Xfin from Xenopus laevis (African clawed frog).